The following is a 343-amino-acid chain: tRNA N6-adenosine threonylcarbamoyltransferase (343 aa).

Positions 114 and 118 each coordinate Fe cation. Substrate is bound by residues 137–141, aspartate 171, glycine 184, aspartate 188, and asparagine 278; that span reads LVSGG. Aspartate 306 serves as a coordination point for Fe cation.

This sequence belongs to the KAE1 / TsaD family. It depends on Fe(2+) as a cofactor.

The protein localises to the cytoplasm. It catalyses the reaction L-threonylcarbamoyladenylate + adenosine(37) in tRNA = N(6)-L-threonylcarbamoyladenosine(37) in tRNA + AMP + H(+). In terms of biological role, required for the formation of a threonylcarbamoyl group on adenosine at position 37 (t(6)A37) in tRNAs that read codons beginning with adenine. Is involved in the transfer of the threonylcarbamoyl moiety of threonylcarbamoyl-AMP (TC-AMP) to the N6 group of A37, together with TsaE and TsaB. TsaD likely plays a direct catalytic role in this reaction. The sequence is that of tRNA N6-adenosine threonylcarbamoyltransferase from Acidothermus cellulolyticus (strain ATCC 43068 / DSM 8971 / 11B).